The sequence spans 406 residues: Cysteine desulfurase (406 aa).

Lys226 is modified (N6-(pyridoxal phosphate)lysine). Cys364 (cysteine persulfide intermediate) is an active-site residue.

This sequence belongs to the class-V pyridoxal-phosphate-dependent aminotransferase family. Csd subfamily. Homodimer. Interacts with SufE and the SufBCD complex composed of SufB, SufC and SufD. The interaction with SufE is required to mediate the direct transfer of the sulfur atom from the S-sulfanylcysteine. Pyridoxal 5'-phosphate serves as cofactor.

The protein localises to the cytoplasm. The catalysed reaction is (sulfur carrier)-H + L-cysteine = (sulfur carrier)-SH + L-alanine. It catalyses the reaction L-selenocysteine + AH2 = hydrogenselenide + L-alanine + A + H(+). It participates in cofactor biosynthesis; iron-sulfur cluster biosynthesis. Cysteine desulfurases mobilize the sulfur from L-cysteine to yield L-alanine, an essential step in sulfur metabolism for biosynthesis of a variety of sulfur-containing biomolecules. Component of the suf operon, which is activated and required under specific conditions such as oxidative stress and iron limitation. Acts as a potent selenocysteine lyase in vitro, that mobilizes selenium from L-selenocysteine. Selenocysteine lyase activity is however unsure in vivo. This is Cysteine desulfurase from Escherichia fergusonii (strain ATCC 35469 / DSM 13698 / CCUG 18766 / IAM 14443 / JCM 21226 / LMG 7866 / NBRC 102419 / NCTC 12128 / CDC 0568-73).